A 424-amino-acid polypeptide reads, in one-letter code: Histidine--tRNA ligase (424 aa).

This sequence belongs to the class-II aminoacyl-tRNA synthetase family. As to quaternary structure, homodimer.

The protein resides in the cytoplasm. The catalysed reaction is tRNA(His) + L-histidine + ATP = L-histidyl-tRNA(His) + AMP + diphosphate + H(+). This Salmonella paratyphi B (strain ATCC BAA-1250 / SPB7) protein is Histidine--tRNA ligase.